Consider the following 126-residue polypeptide: Holo-[acyl-carrier-protein] synthase (126 aa).

D8 and E57 together coordinate Mg(2+).

The protein belongs to the P-Pant transferase superfamily. AcpS family. The cofactor is Mg(2+).

The protein localises to the cytoplasm. It carries out the reaction apo-[ACP] + CoA = holo-[ACP] + adenosine 3',5'-bisphosphate + H(+). Its function is as follows. Transfers the 4'-phosphopantetheine moiety from coenzyme A to a Ser of acyl-carrier-protein. The protein is Holo-[acyl-carrier-protein] synthase of Vibrio cholerae serotype O1 (strain ATCC 39315 / El Tor Inaba N16961).